The primary structure comprises 245 residues: Probable transcriptional regulatory protein SUN_1622 (245 aa).

Belongs to the TACO1 family.

Its subcellular location is the cytoplasm. In Sulfurovum sp. (strain NBC37-1), this protein is Probable transcriptional regulatory protein SUN_1622.